The sequence spans 310 residues: Porphobilinogen deaminase (310 aa).

Cys242 is modified (S-(dipyrrolylmethanemethyl)cysteine).

It belongs to the HMBS family. In terms of assembly, monomer. Dipyrromethane serves as cofactor.

The catalysed reaction is 4 porphobilinogen + H2O = hydroxymethylbilane + 4 NH4(+). Its pathway is porphyrin-containing compound metabolism; protoporphyrin-IX biosynthesis; coproporphyrinogen-III from 5-aminolevulinate: step 2/4. Tetrapolymerization of the monopyrrole PBG into the hydroxymethylbilane pre-uroporphyrinogen in several discrete steps. The protein is Porphobilinogen deaminase of Shewanella halifaxensis (strain HAW-EB4).